Consider the following 177-residue polypeptide: Flavodoxin (177 aa).

The Flavodoxin-like domain occupies 4–173 (IGIFFGSDTG…RIDSWLEKLK (170 aa)).

Belongs to the flavodoxin family. FMN is required as a cofactor.

In terms of biological role, low-potential electron donor to a number of redox enzymes. NifF is the electron donor to nitrogenase. This is Flavodoxin (nifF) from Enterobacter agglomerans (Erwinia herbicola).